Reading from the N-terminus, the 359-residue chain is DNA integrity scanning protein DisA (359 aa).

Residues 7–145 form the DAC domain; it reads DPTGRAVLRA…DGRRWVLEDS (139 aa). Residues G74, L92, and 105-109 each bind ATP; that span reads TRHRT.

The protein belongs to the DisA family. In terms of assembly, homooctamer. The cofactor is Mg(2+).

It catalyses the reaction 2 ATP = 3',3'-c-di-AMP + 2 diphosphate. Participates in a DNA-damage check-point. DisA forms globular foci that rapidly scan along the chromosomes searching for lesions. Functionally, also has diadenylate cyclase activity, catalyzing the condensation of 2 ATP molecules into cyclic di-AMP (c-di-AMP). c-di-AMP likely acts as a signaling molecule that may couple DNA integrity with a cellular process. The chain is DNA integrity scanning protein DisA from Beutenbergia cavernae (strain ATCC BAA-8 / DSM 12333 / CCUG 43141 / JCM 11478 / NBRC 16432 / NCIMB 13614 / HKI 0122).